Reading from the N-terminus, the 407-residue chain is Arylacetamide deacetylase-like 3 (407 aa).

The Involved in the stabilization of the negatively charged intermediate by the formation of the oxyanion hole signature appears at His119–Gly121. Residues Ser193, Asp347, and His377 contribute to the active site.

It belongs to the 'GDXG' lipolytic enzyme family.

The protein is Arylacetamide deacetylase-like 3 (AADACL3) of Homo sapiens (Human).